Reading from the N-terminus, the 201-residue chain is MACGATLKRTLDFDPLLSPASPKRRRCAPLSAPASAAASPAAATAAAAASAAAASPQKYLRMEPSPFGDVSSRLTTEQILYNIKQEYKRMQKRRHLEASFQQTDPGCSSDSQPHAFLISGPASPGTSSATSSPLKKEQPLFTLRQVGMICERLLKEREEKVREEYEEILNTKLAEQYDAFVKFTHDQIMRRYGEQPASYVS.

S18 and S21 each carry phosphoserine. The short motif at 22–27 (PKRRRC) is the Nuclear localization signal element. A Phosphoserine modification is found at S55. Residues 198 to 201 (SYVS) carry the SYVS motif motif.

It belongs to the akirin family. As to quaternary structure, homodimer. Interacts with IPO9; the interaction is direct. Associates with 20S and 26S proteasomes. Interacts with SMARCD1; promoting SWI/SNF complex recruitment. Interacts with NFKBIZ. Interacts with YWHAB. In terms of processing, polyubiquitinated. Polyubiquitination is dependent of UBR5 that extends pre-ubiquitinated AKIRIN2. As to expression, highly expressed in testis, cerebrum and cerebellum, and barely detectable in liver, heart, spleen and muscle. Also highly expressed in various tumor cells from hepatoma, glioblastoma and pheochromocytoma.

Its subcellular location is the nucleus. It localises to the cytoplasm. The protein resides in the membrane. Molecular adapter that acts as a bridge between a variety of multiprotein complexes, and which is involved in embryonic development, immunity, myogenesis and brain development. Plays a key role in nuclear protein degradation by promoting import of proteasomes into the nucleus: directly binds to fully assembled 20S proteasomes at one end and to nuclear import receptor IPO9 at the other end, bridging them together and mediating the import of pre-assembled proteasome complexes through the nuclear pore. Involved in innate immunity by regulating the production of interleukin-6 (IL6) downstream of Toll-like receptor (TLR): acts by bridging the NF-kappa-B inhibitor NFKBIZ and the SWI/SNF complex, leading to promote induction of IL6. Also involved in adaptive immunity by promoting B-cell activation. Involved in brain development: required for the survival and proliferation of cerebral cortical progenitor cells. Involved in myogenesis: required for skeletal muscle formation and skeletal development, possibly by regulating expression of muscle differentiation factors. Also plays a role in facilitating interdigital tissue regression during limb development. The protein is Akirin-2 of Rattus norvegicus (Rat).